Here is a 341-residue protein sequence, read N- to C-terminus: Ketol-acid reductoisomerase (NADP(+)) (341 aa).

Positions 1–182 (MTEMFYDDDA…GGTRAGVIKT (182 aa)) constitute a KARI N-terminal Rossmann domain. Residues 25 to 28 (YGSQ), Lys-48, Ser-51, Ser-53, and 83 to 86 (DQHQ) contribute to the NADP(+) site. The active site involves His-108. Gly-134 is a binding site for NADP(+). Positions 183-328 (TFTEETETDL…RELRGLFSWQ (146 aa)) constitute a KARI C-terminal knotted domain. Mg(2+) contacts are provided by Asp-191, Glu-195, Glu-227, and Glu-231. Ser-252 is a binding site for substrate.

It belongs to the ketol-acid reductoisomerase family. Mg(2+) is required as a cofactor.

The enzyme catalyses (2R)-2,3-dihydroxy-3-methylbutanoate + NADP(+) = (2S)-2-acetolactate + NADPH + H(+). It catalyses the reaction (2R,3R)-2,3-dihydroxy-3-methylpentanoate + NADP(+) = (S)-2-ethyl-2-hydroxy-3-oxobutanoate + NADPH + H(+). The protein operates within amino-acid biosynthesis; L-isoleucine biosynthesis; L-isoleucine from 2-oxobutanoate: step 2/4. It participates in amino-acid biosynthesis; L-valine biosynthesis; L-valine from pyruvate: step 2/4. Involved in the biosynthesis of branched-chain amino acids (BCAA). Catalyzes an alkyl-migration followed by a ketol-acid reduction of (S)-2-acetolactate (S2AL) to yield (R)-2,3-dihydroxy-isovalerate. In the isomerase reaction, S2AL is rearranged via a Mg-dependent methyl migration to produce 3-hydroxy-3-methyl-2-ketobutyrate (HMKB). In the reductase reaction, this 2-ketoacid undergoes a metal-dependent reduction by NADPH to yield (R)-2,3-dihydroxy-isovalerate. In Arthrobacter sp. (strain FB24), this protein is Ketol-acid reductoisomerase (NADP(+)).